The following is a 131-amino-acid chain: Small ribosomal subunit protein bS6 (131 aa).

The tract at residues 98 to 131 (EASPMVKAKDERRERRDDFANETADDSDAGDSEE) is disordered. Positions 104–116 (KAKDERRERRDDF) are enriched in basic and acidic residues. Acidic residues predominate over residues 120 to 131 (TADDSDAGDSEE).

The protein belongs to the bacterial ribosomal protein bS6 family.

Functionally, binds together with bS18 to 16S ribosomal RNA. This is Small ribosomal subunit protein bS6 from Enterobacter sp. (strain 638).